The following is a 73-amino-acid chain: Translation initiation factor IF-1 1 (73 aa).

In terms of domain architecture, S1-like spans 1-72 (MAKEELIEFG…TKGRINFRHK (72 aa)).

It belongs to the IF-1 family. In terms of assembly, component of the 30S ribosomal translation pre-initiation complex which assembles on the 30S ribosome in the order IF-2 and IF-3, IF-1 and N-formylmethionyl-tRNA(fMet); mRNA recruitment can occur at any time during PIC assembly.

Its subcellular location is the cytoplasm. Its function is as follows. One of the essential components for the initiation of protein synthesis. Stabilizes the binding of IF-2 and IF-3 on the 30S subunit to which N-formylmethionyl-tRNA(fMet) subsequently binds. Helps modulate mRNA selection, yielding the 30S pre-initiation complex (PIC). Upon addition of the 50S ribosomal subunit IF-1, IF-2 and IF-3 are released leaving the mature 70S translation initiation complex. This is Translation initiation factor IF-1 1 from Cupriavidus pinatubonensis (strain JMP 134 / LMG 1197) (Cupriavidus necator (strain JMP 134)).